A 545-amino-acid chain; its full sequence is CTP synthase (545 aa).

Residues 1–266 (MTTNYIFVTG…DDYICKRFSL (266 aa)) form an amidoligase domain region. Ser-14 serves as a coordination point for CTP. Ser-14 lines the UTP pocket. ATP is bound by residues 15-20 (SLGKGI) and Asp-72. Mg(2+)-binding residues include Asp-72 and Glu-140. Residues 147–149 (DIE), 187–192 (KTKPTQ), and Lys-223 each bind CTP. Residues 187 to 192 (KTKPTQ) and Lys-223 contribute to the UTP site. Residue 239–241 (KDV) participates in ATP binding. The region spanning 291 to 542 (TIGMVGKYIE…VKAASEYQKR (252 aa)) is the Glutamine amidotransferase type-1 domain. Position 352 (Gly-352) interacts with L-glutamine. The active-site Nucleophile; for glutamine hydrolysis is Cys-379. L-glutamine-binding positions include 380 to 383 (LGMQ), Glu-403, and Arg-470. Active-site residues include His-515 and Glu-517.

Belongs to the CTP synthase family. As to quaternary structure, homotetramer.

It carries out the reaction UTP + L-glutamine + ATP + H2O = CTP + L-glutamate + ADP + phosphate + 2 H(+). It catalyses the reaction L-glutamine + H2O = L-glutamate + NH4(+). The catalysed reaction is UTP + NH4(+) + ATP = CTP + ADP + phosphate + 2 H(+). The protein operates within pyrimidine metabolism; CTP biosynthesis via de novo pathway; CTP from UDP: step 2/2. Its activity is regulated as follows. Allosterically activated by GTP, when glutamine is the substrate; GTP has no effect on the reaction when ammonia is the substrate. The allosteric effector GTP functions by stabilizing the protein conformation that binds the tetrahedral intermediate(s) formed during glutamine hydrolysis. Inhibited by the product CTP, via allosteric rather than competitive inhibition. Catalyzes the ATP-dependent amination of UTP to CTP with either L-glutamine or ammonia as the source of nitrogen. Regulates intracellular CTP levels through interactions with the four ribonucleotide triphosphates. The polypeptide is CTP synthase (Klebsiella pneumoniae (strain 342)).